The following is a 334-amino-acid chain: N-acetyl-gamma-glutamyl-phosphate reductase (334 aa).

Residue C149 is part of the active site.

It belongs to the NAGSA dehydrogenase family. Type 1 subfamily.

The protein localises to the cytoplasm. It carries out the reaction N-acetyl-L-glutamate 5-semialdehyde + phosphate + NADP(+) = N-acetyl-L-glutamyl 5-phosphate + NADPH + H(+). It participates in amino-acid biosynthesis; L-arginine biosynthesis; N(2)-acetyl-L-ornithine from L-glutamate: step 3/4. Its function is as follows. Catalyzes the NADPH-dependent reduction of N-acetyl-5-glutamyl phosphate to yield N-acetyl-L-glutamate 5-semialdehyde. The polypeptide is N-acetyl-gamma-glutamyl-phosphate reductase (Sulfurimonas denitrificans (strain ATCC 33889 / DSM 1251) (Thiomicrospira denitrificans (strain ATCC 33889 / DSM 1251))).